The following is a 141-amino-acid chain: Flagellar assembly factor FliW (141 aa).

It belongs to the FliW family. Interacts with translational regulator CsrA and flagellin(s).

The protein resides in the cytoplasm. In terms of biological role, acts as an anti-CsrA protein, binds CsrA and prevents it from repressing translation of its target genes, one of which is flagellin. Binds to flagellin and participates in the assembly of the flagellum. This Clostridium beijerinckii (strain ATCC 51743 / NCIMB 8052) (Clostridium acetobutylicum) protein is Flagellar assembly factor FliW.